The sequence spans 39 residues: Bacteriocin lactococcin-G subunit alpha (39 aa).

Bacteriocin activity requires interaction of alpha and beta peptides in a molar ratio of 7:1 or 8:1 respectively.

Functionally, kills Lactococci. The chain is Bacteriocin lactococcin-G subunit alpha from Lactococcus lactis subsp. lactis (Streptococcus lactis).